The sequence spans 377 residues: MAAAAQSRVVRVLSMSRSAITAIATSVCHGPPCRQLHHALIPHGKGGRSSVSGIVATVFGATGFLGRYVVNHLGRMGSQVIIPYRCDKYDIMHLRPMGDLGQLLFLEWDARDKDSIRRVVQHSNVVINLIGRDWETKNFDFEDVFVKIPQAIAQLSKEAGVEKFIHVSHLNANIKSSSRYLRNKAVGEKVVRDAFPEAIIIKPSDIFGREDRFLNSFASMHRFGPIPLGSLGWKTVKQPVYVVDVSKGIVNAVKDPDANGKSFAFVGPSRYLLFHLVKYIFAVAHRLFLPFPLPLFAYRWVARVFEISPFEPWITRDKVERMHITDMKLPHLPGLEDLGIQATPLELKAIEVLRRHRTYRWLSAEIEDVKPAKTVNI.

Residues 1–35 (MAAAAQSRVVRVLSMSRSAITAIATSVCHGPPCRQ) constitute a mitochondrion transit peptide. Lysine 175 is subject to N6-succinyllysine. Lysine 189 and lysine 370 each carry N6-acetyllysine.

This sequence belongs to the complex I NDUFA9 subunit family. Complex I is composed of 45 different subunits. This a component of the hydrophobic protein fraction. Interacts with BLOC1S1. Interacts with SLC2A4. Interacts with CLOCK. Interacts with RAB5IF. FAD serves as cofactor. Acetylated on lysine residues. BLOC1S1 is required for acetylation.

It localises to the mitochondrion matrix. Accessory subunit of the mitochondrial membrane respiratory chain NADH dehydrogenase (Complex I), that is believed not to be involved in catalysis. Complex I functions in the transfer of electrons from NADH to the respiratory chain. The immediate electron acceptor for the enzyme is believed to be ubiquinone. This Gorilla gorilla gorilla (Western lowland gorilla) protein is NADH dehydrogenase [ubiquinone] 1 alpha subcomplex subunit 9, mitochondrial (NDUFA9).